The chain runs to 504 residues: Light-independent protochlorophyllide reductase subunit B (504 aa).

Asp-36 is a binding site for [4Fe-4S] cluster. The active-site Proton donor is the Asp-279. 414 to 415 (GL) contacts substrate.

It belongs to the ChlB/BchB/BchZ family. In terms of assembly, protochlorophyllide reductase is composed of three subunits; BchL, BchN and BchB. Forms a heterotetramer of two BchB and two BchN subunits. [4Fe-4S] cluster is required as a cofactor.

It carries out the reaction chlorophyllide a + oxidized 2[4Fe-4S]-[ferredoxin] + 2 ADP + 2 phosphate = protochlorophyllide a + reduced 2[4Fe-4S]-[ferredoxin] + 2 ATP + 2 H2O. It participates in porphyrin-containing compound metabolism; bacteriochlorophyll biosynthesis (light-independent). Its function is as follows. Component of the dark-operative protochlorophyllide reductase (DPOR) that uses Mg-ATP and reduced ferredoxin to reduce ring D of protochlorophyllide (Pchlide) to form chlorophyllide a (Chlide). This reaction is light-independent. The NB-protein (BchN-BchB) is the catalytic component of the complex. The chain is Light-independent protochlorophyllide reductase subunit B from Acidiphilium rubrum.